Here is a 504-residue protein sequence, read N- to C-terminus: Peroxisomal N(1)-acetyl-spermine/spermidine oxidase (504 aa).

Residues alanine 16, glutamate 37, arginine 45, and 61 to 62 contribute to the FAD site; that span reads HW. Positions 64 and 187 each coordinate substrate. An FAD-binding site is contributed by valine 240. Asparagine 313 is a binding site for substrate. Residues glutamate 465 and 474–475 contribute to the FAD site; that span reads TT. The short motif at 502-504 is the Microbody targeting signal element; sequence PRL.

It belongs to the flavin monoamine oxidase family. As to quaternary structure, monomer. Requires FAD as cofactor. In terms of tissue distribution, widely expressed at different developmental stages. Expressed at high level in the liver and the stomach, expressed at lower level in heart, spleen, thymus, small intestine, muscle, pancreas, uterus, and breast and expressed at very low level in brain, kidney, lung, testis, skin, adrenal gland and prostate gland.

The protein localises to the peroxisome. The protein resides in the cytoplasm. The enzyme catalyses N(1)-acetylspermine + O2 + H2O = 3-acetamidopropanal + spermidine + H2O2. It carries out the reaction N(1)-acetylspermidine + O2 + H2O = 3-acetamidopropanal + putrescine + H2O2. The catalysed reaction is N(1),N(12)-diacetylspermine + O2 + H2O = 3-acetamidopropanal + N(1)-acetylspermidine + H2O2. It functions in the pathway amine and polyamine metabolism; spermine metabolism. Flavoenzyme which catalyzes the oxidation of N(1)-acetylspermine to spermidine and is thus involved in the polyamine back-conversion. Can also oxidize N(1)-acetylspermidine to putrescine. Substrate specificity: N(1)-acetylspermine = N(1)-acetylspermidine &gt; N(1),N(12)-diacylspermine &gt;&gt; spermine. Does not oxidize spermidine. Plays an important role in the regulation of polyamine intracellular concentration and has the potential to act as a determinant of cellular sensitivity to the antitumor polyamine analogs. This is Peroxisomal N(1)-acetyl-spermine/spermidine oxidase (Paox) from Mus musculus (Mouse).